The chain runs to 68 residues: DNA-directed RNA polymerase subunit Rpo10 (68 aa).

Residues Cys-7, Cys-10, Cys-44, and Cys-45 each coordinate Zn(2+).

The protein belongs to the archaeal Rpo10/eukaryotic RPB10 RNA polymerase subunit family. As to quaternary structure, part of the RNA polymerase complex. Requires Zn(2+) as cofactor.

It is found in the cytoplasm. The catalysed reaction is RNA(n) + a ribonucleoside 5'-triphosphate = RNA(n+1) + diphosphate. DNA-dependent RNA polymerase (RNAP) catalyzes the transcription of DNA into RNA using the four ribonucleoside triphosphates as substrates. This chain is DNA-directed RNA polymerase subunit Rpo10, found in Methanococcus vannielii (strain ATCC 35089 / DSM 1224 / JCM 13029 / OCM 148 / SB).